Consider the following 320-residue polypeptide: Putative malonate transporter (320 aa).

Transmembrane regions (helical) follow at residues 1–21 (MAEI…GYLT), 32–52 (MGWL…FKLV), 65–85 (FILT…AIGL), 113–133 (GLAL…IFCF), 167–187 (IAFH…FLSF), 196–216 (LIDY…GVTL), 256–276 (IWVQ…VFVI), and 289–309 (ATIL…LYLI).

Belongs to the auxin efflux carrier (TC 2.A.69) family.

It localises to the cell membrane. The polypeptide is Putative malonate transporter (mdcF) (Rhizobium meliloti (strain 1021) (Ensifer meliloti)).